A 254-amino-acid polypeptide reads, in one-letter code: 3-deoxy-manno-octulosonate cytidylyltransferase (254 aa).

It belongs to the KdsB family.

The protein localises to the cytoplasm. It carries out the reaction 3-deoxy-alpha-D-manno-oct-2-ulosonate + CTP = CMP-3-deoxy-beta-D-manno-octulosonate + diphosphate. Its pathway is nucleotide-sugar biosynthesis; CMP-3-deoxy-D-manno-octulosonate biosynthesis; CMP-3-deoxy-D-manno-octulosonate from 3-deoxy-D-manno-octulosonate and CTP: step 1/1. It functions in the pathway bacterial outer membrane biogenesis; lipopolysaccharide biosynthesis. In terms of biological role, activates KDO (a required 8-carbon sugar) for incorporation into bacterial lipopolysaccharide in Gram-negative bacteria. In Pseudomonas syringae pv. tomato (strain ATCC BAA-871 / DC3000), this protein is 3-deoxy-manno-octulosonate cytidylyltransferase.